We begin with the raw amino-acid sequence, 382 residues long: Glutamyl-tRNA reductase (382 aa).

Residues 38–41 (TCNR), serine 85, 90–92 (ENQ), and glutamine 96 each bind substrate. The active-site Nucleophile is cysteine 39. 164-169 (GAGEMG) lines the NADP(+) pocket.

Belongs to the glutamyl-tRNA reductase family. Homodimer.

It carries out the reaction (S)-4-amino-5-oxopentanoate + tRNA(Glu) + NADP(+) = L-glutamyl-tRNA(Glu) + NADPH + H(+). The protein operates within porphyrin-containing compound metabolism; protoporphyrin-IX biosynthesis; 5-aminolevulinate from L-glutamyl-tRNA(Glu): step 1/2. Its function is as follows. Catalyzes the NADPH-dependent reduction of glutamyl-tRNA(Glu) to glutamate 1-semialdehyde (GSA). The polypeptide is Glutamyl-tRNA reductase (Methanococcus maripaludis (strain C5 / ATCC BAA-1333)).